Reading from the N-terminus, the 206-residue chain is Small ribosomal subunit protein uS4 (206 aa).

An S4 RNA-binding domain is found at 96–157 (RRLDNVVYRM…KAKKQVRIQD (62 aa)).

This sequence belongs to the universal ribosomal protein uS4 family. Part of the 30S ribosomal subunit. Contacts protein S5. The interaction surface between S4 and S5 is involved in control of translational fidelity.

Its function is as follows. One of the primary rRNA binding proteins, it binds directly to 16S rRNA where it nucleates assembly of the body of the 30S subunit. In terms of biological role, with S5 and S12 plays an important role in translational accuracy. This is Small ribosomal subunit protein uS4 from Thioalkalivibrio sulfidiphilus (strain HL-EbGR7).